The sequence spans 518 residues: Sensor protein kinase HptS (518 aa).

2 helical membrane-spanning segments follow: residues 20–40 and 222–242; these read IFPV…IYIW and GITL…FGFI. Positions 297-513 constitute a Histidine kinase domain; sequence EQLIHSIEHT…LICYKIPLSR (217 aa). A Phosphohistidine; by autocatalysis modification is found at His-325.

Autophosphorylated.

It localises to the cell membrane. The enzyme catalyses ATP + protein L-histidine = ADP + protein N-phospho-L-histidine.. Functionally, member of the two-component regulatory system HptS/HptR that regulates genes involved in hexose phosphate transport system in response to changes in extracellular phosphate sources. May act as a sensor protein kinase which is autophosphorylated at a histidine residue and transfers its phosphate group to the conserved aspartic acid residue in the regulatory domain of HptS. In turn, HptS antagonizes CcpA-dependent transcription of a subset of CcpA-regulated genes involved in antibiotic susceptibility. In Staphylococcus aureus (strain bovine RF122 / ET3-1), this protein is Sensor protein kinase HptS (hptS).